A 216-amino-acid chain; its full sequence is Sugar fermentation stimulation protein homolog (216 aa).

The protein belongs to the SfsA family.

This Thermoplasma volcanium (strain ATCC 51530 / DSM 4299 / JCM 9571 / NBRC 15438 / GSS1) protein is Sugar fermentation stimulation protein homolog.